The chain runs to 243 residues: 1-(5-phosphoribosyl)-5-[(5-phosphoribosylamino)methylideneamino] imidazole-4-carboxamide isomerase (243 aa).

The active-site Proton acceptor is the Asp8. Asp129 acts as the Proton donor in catalysis.

Belongs to the HisA/HisF family.

Its subcellular location is the cytoplasm. The enzyme catalyses 1-(5-phospho-beta-D-ribosyl)-5-[(5-phospho-beta-D-ribosylamino)methylideneamino]imidazole-4-carboxamide = 5-[(5-phospho-1-deoxy-D-ribulos-1-ylimino)methylamino]-1-(5-phospho-beta-D-ribosyl)imidazole-4-carboxamide. Its pathway is amino-acid biosynthesis; L-histidine biosynthesis; L-histidine from 5-phospho-alpha-D-ribose 1-diphosphate: step 4/9. This is 1-(5-phosphoribosyl)-5-[(5-phosphoribosylamino)methylideneamino] imidazole-4-carboxamide isomerase from Azorhizobium caulinodans (strain ATCC 43989 / DSM 5975 / JCM 20966 / LMG 6465 / NBRC 14845 / NCIMB 13405 / ORS 571).